The primary structure comprises 311 residues: Probable dihydroorotate dehydrogenase A (fumarate) (311 aa).

Substrate is bound by residues Lys-45, 69–73 (NSMGL), and Asn-128. 45–46 (KT) lines the FMN pocket. Asn-128 provides a ligand contact to FMN. The active-site Nucleophile is the Cys-131. Residues Lys-165 and Val-193 each contribute to the FMN site. 194 to 195 (NS) contributes to the substrate binding site. Residues Gly-220, 248-249 (GG), and 270-271 (GT) each bind FMN.

Belongs to the dihydroorotate dehydrogenase family. Type 1 subfamily. As to quaternary structure, homodimer. It depends on FMN as a cofactor.

It localises to the cytoplasm. It catalyses the reaction (S)-dihydroorotate + fumarate = orotate + succinate. Its pathway is pyrimidine metabolism; UMP biosynthesis via de novo pathway. Its function is as follows. Catalyzes the conversion of dihydroorotate to orotate with fumarate as the electron acceptor. The chain is Probable dihydroorotate dehydrogenase A (fumarate) (pyrDA) from Streptococcus pneumoniae (strain ATCC BAA-255 / R6).